We begin with the raw amino-acid sequence, 260 residues long: Cytochrome c1-2, heme protein, mitochondrial (260 aa).

The N-terminal 17 residues, 1 to 17, are a transit peptide targeting the mitochondrion; the sequence is IGAGVSGLLGFATVASA. At 18–221 the chain is on the mitochondrial intermembrane side; the sequence is DEAEHGLECP…AAEPEMEERK (204 aa). Residues 43–150 form the Cytochrome c domain; sequence ASIRRGHQVY…NGQNYVFALL (108 aa). Heme c contacts are provided by Cys-56, Cys-59, His-60, and Met-179. A helical transmembrane segment spans residues 222–241; sequence LMGFKWIFVLSLALLQAAYY. At 242-260 the chain is on the mitochondrial matrix side; that stretch reads RRLRWSVLKSRKLVLDVVN.

It belongs to the cytochrome c family. In terms of assembly, component of the ubiquinol-cytochrome c oxidoreductase (cytochrome b-c1 complex, complex III, CIII), a multisubunit enzyme composed of 3 respiratory subunits cytochrome b, cytochrome c1 and Rieske protein, 2 core protein subunits, and additional low-molecular weight protein subunits. The complex exists as an obligatory dimer and forms supercomplexes (SCs) in the inner mitochondrial membrane with cytochrome c oxidase (complex IV, CIV). Heme c is required as a cofactor. As to expression, in all tissues analyzed.

The protein localises to the mitochondrion inner membrane. The catalysed reaction is a quinol + 2 Fe(III)-[cytochrome c](out) = a quinone + 2 Fe(II)-[cytochrome c](out) + 2 H(+)(out). In terms of biological role, component of the ubiquinol-cytochrome c oxidoreductase, a multisubunit transmembrane complex that is part of the mitochondrial electron transport chain which drives oxidative phosphorylation. The respiratory chain contains 3 multisubunit complexes succinate dehydrogenase (complex II, CII), ubiquinol-cytochrome c oxidoreductase (cytochrome b-c1 complex, complex III, CIII) and cytochrome c oxidase (complex IV, CIV), that cooperate to transfer electrons derived from NADH and succinate to molecular oxygen, creating an electrochemical gradient over the inner membrane that drives transmembrane transport and the ATP synthase. The cytochrome b-c1 complex catalyzes electron transfer from ubiquinol to cytochrome c, linking this redox reaction to translocation of protons across the mitochondrial inner membrane, with protons being carried across the membrane as hydrogens on the quinol. In the process called Q cycle, 2 protons are consumed from the matrix, 4 protons are released into the intermembrane space and 2 electrons are passed to cytochrome c. Cytochrome c1 is a catalytic core subunit containing a c-type heme. It transfers electrons from the [2Fe-2S] iron-sulfur cluster of the Rieske protein to cytochrome c. The chain is Cytochrome c1-2, heme protein, mitochondrial (CYCL) from Solanum tuberosum (Potato).